The primary structure comprises 311 residues: tRNA dimethylallyltransferase (311 aa).

Gly9–Thr16 lines the ATP pocket. Thr11–Thr16 contacts substrate. An interaction with substrate tRNA region spans residues Asp34 to Gln37.

This sequence belongs to the IPP transferase family. Monomer. It depends on Mg(2+) as a cofactor.

The enzyme catalyses adenosine(37) in tRNA + dimethylallyl diphosphate = N(6)-dimethylallyladenosine(37) in tRNA + diphosphate. In terms of biological role, catalyzes the transfer of a dimethylallyl group onto the adenine at position 37 in tRNAs that read codons beginning with uridine, leading to the formation of N6-(dimethylallyl)adenosine (i(6)A). The protein is tRNA dimethylallyltransferase of Clostridium botulinum (strain Langeland / NCTC 10281 / Type F).